We begin with the raw amino-acid sequence, 342 residues long: Molybdate/tungstate-binding protein WtpA (342 aa).

The first 24 residues, 1-24, serve as a signal peptide directing secretion; the sequence is MHIGGGVVKIRILILLMLALFLLG. Residues 41 to 42, Ser-70, 153 to 155, Glu-218, and Tyr-236 each bind molybdate; these read GS and DPC. Tungstate contacts are provided by residues 41–42, Ser-70, 153–155, Glu-218, and Tyr-236; these read GS and DPC.

The protein belongs to the bacterial solute-binding protein 1 family. WtpA subfamily. The complex is composed of two ATP-binding proteins (WtpC), two transmembrane proteins (WtpB) and a solute-binding protein (WtpA).

It localises to the cell membrane. Its function is as follows. Part of the ABC transporter complex WtpABC involved in molybdate/tungstate import. Binds tungstate and molybdate. In Archaeoglobus fulgidus (strain ATCC 49558 / DSM 4304 / JCM 9628 / NBRC 100126 / VC-16), this protein is Molybdate/tungstate-binding protein WtpA (wtpA).